The following is a 210-amino-acid chain: Helix-loop-helix protein 26 (210 aa).

Positions 1-15 (MSSSPTSSSSGSPSS) are enriched in low complexity. The tract at residues 1 to 33 (MSSSPTSSSSGSPSSHGHRSETEKQRRDDTNDL) is disordered. The 52-residue stretch at 14 to 65 (SSHGHRSETEKQRRDDTNDLLNEFKKIVQKSESEKLSKEEVLFRIVKLLSGI) folds into the bHLH domain. The span at 18 to 33 (HRSETEKQRRDDTNDL) shows a compositional bias: basic and acidic residues.

As to quaternary structure, homodimer; binds to DNA as a homodimer. In terms of tissue distribution, expressed in intestinal cells (at protein level).

It is found in the nucleus. Functionally, as a homodimer binds DNA via the E-box sequence 5'-CACGTG-3'. Represses lag-2 transcription during embryogenesis via Notch signaling, in an unc-37-dependent manner. Also represses tbx-37 independent of Notch signaling. In the intestine, plays a role in probiotic-mediated protection against infections by pathogens such as S.enterica. This is most likely by positively regulating the expression of genes such as bar-1 upon exposure to probiotic bacteria such as the E.faecium. This is Helix-loop-helix protein 26 from Caenorhabditis elegans.